The following is a 206-amino-acid chain: Ras-related protein RABH1a (206 aa).

GTP is bound at residue Gly-14–Thr-21. The Effector region motif lies at Tyr-36–Phe-44. GTP is bound by residues Asp-62–Gln-66, Asn-120–Asp-123, and Ser-150–Ala-151. Residues Cys-204 and Cys-206 are each lipidated (S-geranylgeranyl cysteine). The residue at position 206 (Cys-206) is a Cysteine methyl ester.

Belongs to the small GTPase superfamily. Rab family.

It is found in the golgi apparatus membrane. Its function is as follows. Protein transport. Regulator of membrane traffic from the Golgi apparatus towards the endoplasmic reticulum (ER). This is Ras-related protein RABH1a (RABH1A) from Arabidopsis thaliana (Mouse-ear cress).